The following is a 378-amino-acid chain: Ribosomal RNA large subunit methyltransferase G (378 aa).

This sequence belongs to the methyltransferase superfamily. RlmG family.

The protein localises to the cytoplasm. It carries out the reaction guanosine(1835) in 23S rRNA + S-adenosyl-L-methionine = N(2)-methylguanosine(1835) in 23S rRNA + S-adenosyl-L-homocysteine + H(+). Functionally, specifically methylates the guanine in position 1835 (m2G1835) of 23S rRNA. This chain is Ribosomal RNA large subunit methyltransferase G, found in Salmonella newport (strain SL254).